Consider the following 133-residue polypeptide: Profilin-3 (133 aa).

This sequence belongs to the profilin family. Occurs in many kinds of cells as a complex with monomeric actin in a 1:1 ratio.

The protein resides in the cytoplasm. Its subcellular location is the cytoskeleton. In terms of biological role, binds to actin and affects the structure of the cytoskeleton. At high concentrations, profilin prevents the polymerization of actin, whereas it enhances it at low concentrations. By binding to PIP2, it inhibits the formation of IP3 and DG. The protein is Profilin-3 (PRO3) of Nicotiana tabacum (Common tobacco).